The sequence spans 571 residues: Hemagglutinin-neuraminidase (571 aa).

Residues 1-26 lie on the Intravirion side of the membrane; the sequence is MDRAVGRVALENEEREAKNTWRFVFR. Residues 27–47 form a helical membrane-spanning segment; that stretch reads IAIFLLIVITLAISAAALVYS. At 48 to 571 the chain is on the virion surface side; it reads MEASTPGDLV…LVEILKEDGV (524 aa). N119 is a glycosylation site (N-linked (GlcNAc...) asparagine; by host). An important for interaction with fusion/F protein region spans residues 124 to 152; it reads GAPVHDPDYIGGIGKELIVDDASDVTSFY. 3 disulfides stabilise this stretch: C172/C196, C186/C247, and C238/C251. The tract at residues 234-239 is involved in neuraminidase activity; that stretch reads NRKSCS. N-linked (GlcNAc...) asparagine; by host glycans are attached at residues N341 and N433. Disulfide bonds link C344/C461 and C455/C465. 3 N-linked (GlcNAc...) asparagine; by host glycosylation sites follow: N481, N508, and N538. The cysteines at positions 531 and 542 are disulfide-linked.

It belongs to the paramyxoviruses hemagglutinin-neuraminidase family. As to quaternary structure, homotetramer; composed of disulfide-linked homodimers. Interacts with F protein trimer. Interacts with host CG-1B; this interaction inhibits viral adsorption and replication rather than internalization.

The protein resides in the virion membrane. It is found in the host cell membrane. It catalyses the reaction Hydrolysis of alpha-(2-&gt;3)-, alpha-(2-&gt;6)-, alpha-(2-&gt;8)- glycosidic linkages of terminal sialic acid residues in oligosaccharides, glycoproteins, glycolipids, colominic acid and synthetic substrates.. Functionally, mediates the viral entry into the host cell together with fusion/F protein. Attaches the virus to sialic acid-containing cell receptors and thereby initiates infection. Binding of HN protein to the receptor induces a conformational change that allows the F protein to trigger virion/cell membranes fusion. In terms of biological role, neuraminidase activity ensures the efficient spread of the virus by dissociating the mature virions from the neuraminic acid containing glycoproteins. This Gallus gallus (Chicken) protein is Hemagglutinin-neuraminidase (HN).